We begin with the raw amino-acid sequence, 438 residues long: Protein SPMIP7 (438 aa).

As to expression, testis-specific.

In terms of biological role, essential for normal spermatogenesis. In Homo sapiens (Human), this protein is Protein SPMIP7.